A 159-amino-acid polypeptide reads, in one-letter code: MDLRIGQGYDVHALVPGRPLIIGGVTIPYERGLLGHSDADVLLHAITDALFGAAALGDIGRHFPDTATEFKGANSRVLLRECAARIARAGFTIQNVDSTVIAQAPKLAPHIDGMRANIAEDLNLPIDRVNVKAKTNEKLGYLGRGEGIEAQAAALLVRV.

Residues Asp-10 and His-12 each contribute to the a divalent metal cation site. Residues 10–12 (DVH) and 36–37 (HS) each bind 4-CDP-2-C-methyl-D-erythritol 2-phosphate. His-44 is a binding site for a divalent metal cation. 4-CDP-2-C-methyl-D-erythritol 2-phosphate contacts are provided by residues 58–60 (DIG) and Arg-144.

It belongs to the IspF family. In terms of assembly, homotrimer. Requires a divalent metal cation as cofactor.

It catalyses the reaction 4-CDP-2-C-methyl-D-erythritol 2-phosphate = 2-C-methyl-D-erythritol 2,4-cyclic diphosphate + CMP. It participates in isoprenoid biosynthesis; isopentenyl diphosphate biosynthesis via DXP pathway; isopentenyl diphosphate from 1-deoxy-D-xylulose 5-phosphate: step 4/6. Functionally, involved in the biosynthesis of isopentenyl diphosphate (IPP) and dimethylallyl diphosphate (DMAPP), two major building blocks of isoprenoid compounds. Catalyzes the conversion of 4-diphosphocytidyl-2-C-methyl-D-erythritol 2-phosphate (CDP-ME2P) to 2-C-methyl-D-erythritol 2,4-cyclodiphosphate (ME-CPP) with a corresponding release of cytidine 5-monophosphate (CMP). The sequence is that of 2-C-methyl-D-erythritol 2,4-cyclodiphosphate synthase from Paraburkholderia phymatum (strain DSM 17167 / CIP 108236 / LMG 21445 / STM815) (Burkholderia phymatum).